Here is a 274-residue protein sequence, read N- to C-terminus: D-aminopeptidase (274 aa).

Zn(2+)-binding residues include aspartate 8, glutamate 10, histidine 60, and histidine 104. The active-site Nucleophile is the histidine 115. Glutamate 133 is a binding site for Zn(2+).

It belongs to the peptidase M55 family. As to quaternary structure, homodecamer. A 20 Angstroms wide channel runs through the complex, giving access to a central chamber holding the active sites. Zn(2+) serves as cofactor.

Its function is as follows. Hydrolyzes N-terminal residues in D-amino acid containing peptides. Among the tested substrates, the highest activities are with D-Ala-D-Ala and D-Ala-Gly-Gly. The physiological role is not clear. The chain is D-aminopeptidase (dppA) from Bacillus subtilis (strain 168).